The chain runs to 682 residues: RNA helicase NPH-II (682 aa).

The 174-residue stretch at 181 to 354 folds into the Helicase ATP-binding domain; sequence FELLRKRKQI…EFLPDVEFYH (174 aa). 194 to 201 provides a ligand contact to ATP; it reads GSTGIGKT. Residues 303 to 306 carry the DEXH box motif; that stretch reads DEIH. Residues 386–551 enclose the Helicase C-terminal domain; sequence NISTTLNWCR…KFKLSLPNDL (166 aa).

This sequence belongs to the DEAD box helicase family. DEAH subfamily. Monomer.

The protein resides in the virion. The enzyme catalyses ATP + H2O = ADP + phosphate + H(+). NTP-dependent helicase that catalyzes unidirectional unwinding of 3'tailed duplex RNAs and plays an important role during transcription of early mRNAs, presumably by preventing R-loop formation behind the elongating RNA polymerase. Might also play a role in the export of newly synthesized mRNA chains out of the core into the cytoplasm. Required for replication and propagation of viral particles. The chain is RNA helicase NPH-II (NPH2) from Vertebrata (FPV).